Here is a 285-residue protein sequence, read N- to C-terminus: Ribonuclease H1 (285 aa).

The interval 72–122 (RSSSSPDGSKGQESAHVQKLQVKTSKRPREPLGEEEEPPEPGAKHTRQDTE) is disordered. The RNase H type-1 domain occupies 135–281 (MGESVVVYTD…ADRLAREGAK (147 aa)). Mg(2+) is bound by residues Asp-144, Glu-185, Asp-209, and Asp-273.

Belongs to the RNase H family. Monomer. Requires Mg(2+) as cofactor.

It localises to the cytoplasm. It catalyses the reaction Endonucleolytic cleavage to 5'-phosphomonoester.. Its activity is regulated as follows. In the presence of magnesium, manganese is inhibitory. Endonuclease that specifically degrades the RNA of RNA-DNA hybrids. Plays a role in RNA polymerase II (RNAp II) transcription termination by degrading R-loop RNA-DNA hybrid formation at G-rich pause sites located downstream of the poly(A) site and behind the elongating RNAp II. The sequence is that of Ribonuclease H1 (Rnaseh1) from Rattus norvegicus (Rat).